The sequence spans 221 residues: Probable septum site-determining protein MinC (221 aa).

Belongs to the MinC family. Interacts with MinD and FtsZ.

Cell division inhibitor that blocks the formation of polar Z ring septums. Rapidly oscillates between the poles of the cell to destabilize FtsZ filaments that have formed before they mature into polar Z rings. Prevents FtsZ polymerization. This chain is Probable septum site-determining protein MinC, found in Aliivibrio fischeri (strain MJ11) (Vibrio fischeri).